A 170-amino-acid chain; its full sequence is Myosin regulatory light chain 1 (170 aa).

Positions 1 to 13 (MSKAAKKKSSKKR) are enriched in basic residues. A disordered region spans residues 1-22 (MSKAAKKKSSKKRSGSEAAQFD). EF-hand domains are found at residues 24–59 (KTIQEFKEAFGIMDQNKDGIIDKSDLKDLYASMGQI) and 93–128 (DPEATIIGAFAMFDKKDCGKIKEDDLIKILQNKRGE). Residues Asp-37, Asn-39, Asp-41, and Asp-48 each contribute to the Ca(2+) site.

Myosin is a hexamer of 2 heavy chains and 4 light chains (two regulatory light chains and two essential light chains).

The chain is Myosin regulatory light chain 1 (mlc-1) from Caenorhabditis elegans.